The primary structure comprises 329 residues: Malate dehydrogenase (329 aa).

NAD(+) is bound at residue 12–18; that stretch reads GAAGQIG. Arg93 and Arg99 together coordinate substrate. NAD(+) contacts are provided by residues Asn106, Gln113, and 130–132; that span reads TGN. Substrate-binding residues include Asn132 and Arg163. His188 acts as the Proton acceptor in catalysis.

Belongs to the LDH/MDH superfamily. MDH type 2 family.

The enzyme catalyses (S)-malate + NAD(+) = oxaloacetate + NADH + H(+). Functionally, catalyzes the reversible oxidation of malate to oxaloacetate. This chain is Malate dehydrogenase, found in Mycobacterium leprae (strain TN).